Here is a 304-residue protein sequence, read N- to C-terminus: D-alanine--D-alanine ligase (304 aa).

The ATP-grasp domain occupies 103-299 (KLIWQALGLP…FADLCIEILK (197 aa)). Residue 129–184 (EEKLGLPMFVKPAAEGSSVGVVKVKEKGRLKSVYEELKHLQGEIIAERFIGGGEYS) coordinates ATP. Residues D253, E266, and N268 each contribute to the Mg(2+) site.

This sequence belongs to the D-alanine--D-alanine ligase family. Requires Mg(2+) as cofactor. Mn(2+) is required as a cofactor.

The protein resides in the cytoplasm. The enzyme catalyses 2 D-alanine + ATP = D-alanyl-D-alanine + ADP + phosphate + H(+). It participates in cell wall biogenesis; peptidoglycan biosynthesis. Functionally, cell wall formation. The sequence is that of D-alanine--D-alanine ligase from Neisseria gonorrhoeae (strain ATCC 700825 / FA 1090).